The chain runs to 349 residues: Autophagy-related protein 3 (349 aa).

The flexible region stretch occupies residues 95–173; sequence ALVNDGDDFK…IRDSGADSKN (79 aa). Cys244 acts as the Glycyl thioester intermediate in catalysis. The interval 248-325 is handle region; it reads SVMKTLLDRA…DQEVAIRVDQ (78 aa). An ATG8 interaction motif (AIM) motif is present at residues 306–309; that stretch reads WEEV.

Belongs to the ATG3 family. As to quaternary structure, monomer. Interacts with ATG8 through an intermediate thioester bond between Cys-244 and the C-terminal Gly of ATG8. Interacts with the C-terminal region of the E1-like ATG7 enzyme. Also interacts with the ATG12-ATG5 conjugate.

The protein resides in the cytoplasm. Its function is as follows. E2 conjugating enzyme required for the cytoplasm to vacuole transport (Cvt) and autophagy. Required for selective autophagic degradation of the nucleus (nucleophagy) as well as for mitophagy which contributes to regulate mitochondrial quantity and quality by eliminating the mitochondria to a basal level to fulfill cellular energy requirements and preventing excess ROS production. Responsible for the E2-like covalent binding of phosphatidylethanolamine to the C-terminal Gly of ATG8. The ATG12-ATG5 conjugate plays a role of an E3 and promotes the transfer of ATG8 from ATG3 to phosphatidylethanolamine (PE). This step is required for the membrane association of ATG8. The formation of the ATG8-phosphatidylethanolamine conjugate is essential for autophagy and for the cytoplasm to vacuole transport (Cvt). The ATG8-PE conjugate mediates tethering between adjacent membranes and stimulates membrane hemifusion, leading to expansion of the autophagosomal membrane during autophagy. Autophagy is required for proper vegetative growth, asexual/sexual reproduction, and full virulence. Autophagy is particularly involved in the biosynthesis of deoxynivalenol (DON), an important virulence determinant. The protein is Autophagy-related protein 3 of Gibberella zeae (strain ATCC MYA-4620 / CBS 123657 / FGSC 9075 / NRRL 31084 / PH-1) (Wheat head blight fungus).